The primary structure comprises 269 residues: Phosphonates import ATP-binding protein PhnC 2 (269 aa).

The 245-residue stretch at 2–246 (LRIDSLSKRY…VLNEIYGEED (245 aa)) folds into the ABC transporter domain. 35-42 (GPSGAGKS) is an ATP binding site. The interval 246-269 (DWNASGPAQDSEENEAVSAGVATH) is disordered.

This sequence belongs to the ABC transporter superfamily. Phosphonates importer (TC 3.A.1.9.1) family. As to quaternary structure, the complex is composed of two ATP-binding proteins (PhnC), two transmembrane proteins (PhnE) and a solute-binding protein (PhnD).

Its subcellular location is the cell inner membrane. The catalysed reaction is phosphonate(out) + ATP + H2O = phosphonate(in) + ADP + phosphate + H(+). In terms of biological role, part of the ABC transporter complex PhnCDE involved in phosphonates import. Responsible for energy coupling to the transport system. The protein is Phosphonates import ATP-binding protein PhnC 2 of Synechococcus sp. (strain JA-2-3B'a(2-13)) (Cyanobacteria bacterium Yellowstone B-Prime).